The chain runs to 503 residues: MSVAANAELMDYDDVIARFDPVLGLEVHVELSTVTKMFCGCTTAFGAEPNTQVCPVCLGLPGSLPVLNQAAVESAIRIGLALNCEIVPWCRFARKNYFYPDMPKNYQISQYDEPIAINGYLEAPLDDGTTWRVDIERAHMEEDTGKLTHIGSETGRIHGATTSLIDYNRAGVPLIEIVTKPIVGAGERAPQIARAYVTALRDLLRALGVSDVRMDQGSMRCDANVSLKPIGTAEFGTRTETKNVNSLKSVEVAVRYEMQRQAAVLASGGRITQETRHFHEAGYTSPGRVKETAEDYRYFPEPDLEPVAPSRELVERLRLTIPELPWLSRKRIQQEWGVSDEVMRDLVNAGAVDLVIETVKHGAPSEQARAWWGNFLVQKANEANIGLDELNISPAQVAAVIALVDEGKLSNKLARQVVEGVLAGEGEPDQVMNARGLELVRDDSVTQAAVDEALAANPDVAEKIRGGKIAAAGAIVGAVMKATRGQADAARVRELVLAACGQG.

Belongs to the GatB/GatE family. GatB subfamily. In terms of assembly, heterotrimer of A, B and C subunits.

It catalyses the reaction L-glutamyl-tRNA(Gln) + L-glutamine + ATP + H2O = L-glutaminyl-tRNA(Gln) + L-glutamate + ADP + phosphate + H(+). The catalysed reaction is L-aspartyl-tRNA(Asn) + L-glutamine + ATP + H2O = L-asparaginyl-tRNA(Asn) + L-glutamate + ADP + phosphate + 2 H(+). Allows the formation of correctly charged Asn-tRNA(Asn) or Gln-tRNA(Gln) through the transamidation of misacylated Asp-tRNA(Asn) or Glu-tRNA(Gln) in organisms which lack either or both of asparaginyl-tRNA or glutaminyl-tRNA synthetases. The reaction takes place in the presence of glutamine and ATP through an activated phospho-Asp-tRNA(Asn) or phospho-Glu-tRNA(Gln). This Mycobacterium avium (strain 104) protein is Aspartyl/glutamyl-tRNA(Asn/Gln) amidotransferase subunit B.